The primary structure comprises 54 residues: Relaxin (54 aa).

Pyrrolidone carboxylic acid is present on Gln1. 3 disulfide bridges follow: Cys10-Cys41, Cys22-Cys54, and Cys40-Cys45.

Belongs to the insulin family. Heterodimer of a B chain and an A chain linked by two disulfide bonds.

It localises to the secreted. Its function is as follows. Relaxin is an ovarian hormone that acts with estrogen to produce dilatation of the birth canal in many mammals. The protein is Relaxin of Balaenoptera acutorostrata (Common minke whale).